The chain runs to 609 residues: Membrane protein insertase YidC (609 aa).

Transmembrane regions (helical) follow at residues 8 to 28 (LILA…LFPP), 381 to 401 (MGWS…PLAL), 451 to 471 (LPIL…FVTI), 509 to 529 (SLTA…SMWL), and 545 to 565 (IFAW…SGLV).

The protein belongs to the OXA1/ALB3/YidC family. Type 1 subfamily. As to quaternary structure, interacts with the Sec translocase complex via SecD. Specifically interacts with transmembrane segments of nascent integral membrane proteins during membrane integration.

It localises to the cell inner membrane. Required for the insertion and/or proper folding and/or complex formation of integral membrane proteins into the membrane. Involved in integration of membrane proteins that insert both dependently and independently of the Sec translocase complex, as well as at least some lipoproteins. Aids folding of multispanning membrane proteins. The polypeptide is Membrane protein insertase YidC (Ruegeria pomeroyi (strain ATCC 700808 / DSM 15171 / DSS-3) (Silicibacter pomeroyi)).